Consider the following 428-residue polypeptide: MRALCLLCWAVLLNLVRACPEPCDCGEKYGFQIADCAYRDLEGVPPGFPANVTTLSLSANRLPGLPEGAFREVPLLQSLWLAHNEIRSVAIGALAPLSHLKSLDLSHNLLSEFAWSDLHNLSALQLLKMDSNELAFIPRDAFSSLSALRSLQLNHNRLHALAEGTFAPLTALSHLQINDNPFDCTCGIVWFKTWALASAVSIPEQDNIACTTPHVLKGIPLGRLPPLPCSAPSVQLSYQPSQDGAELRPGFVLALHCDVDGQPVPQLHWHIHTPGGTVEIASPNVGTDGRALPGALATSGQPRFQAFANGSLLIPDFGKLEEGTYSCLATNELGSAESSVNVALATPGEGGEDAVGHKFHGKAVEGKGCYTVDNEVQPSGPEDNVVIIYLSRAGPPEAAIAADGRPAQQFSGILLLGQSLLVLSFFYF.

An N-terminal signal peptide occupies residues 1-18; it reads MRALCLLCWAVLLNLVRA. Positions 19–50 constitute an LRRNT domain; it reads CPEPCDCGEKYGFQIADCAYRDLEGVPPGFPA. An N-linked (GlcNAc...) asparagine glycan is attached at asparagine 51. LRR repeat units follow at residues 51–72, 75–98, 99–122, 123–144, and 147–168; these read NVTT…AFRE, LLQS…APLS, HLKS…HNLS, ALQL…AFSS, and ALRS…TFAP. The region spanning 180–231 is the LRRCT domain; the sequence is NPFDCTCGIVWFKTWALASAVSIPEQDNIACTTPHVLKGIPLGRLPPLPCSA. The Ig-like domain occupies 232–343; it reads PSVQLSYQPS…GSAESSVNVA (112 aa). Cysteines 257 and 327 form a disulfide. Asparagine 309 is a glycosylation site (N-linked (GlcNAc...) asparagine).

In terms of tissue distribution, detected in thyroid, heart, retina and spinal cord.

It localises to the secreted. In Mus musculus (Mouse), this protein is Immunoglobulin superfamily containing leucine-rich repeat protein (Islr).